The sequence spans 177 residues: Transmembrane protein 196 (177 aa).

Transmembrane regions (helical) follow at residues 11-31 (LLVL…VGAV), 47-67 (SSPV…IFCA), 73-93 (LIMI…ILNI), and 106-126 (LYSL…GCTI). The segment covering 152 to 162 (HSHEMTEKDTE) has biased composition (basic and acidic residues). Positions 152-177 (HSHEMTEKDTENITNGGGPLALNGRV) are disordered.

The protein localises to the cytoplasm. Its subcellular location is the membrane. This Xenopus tropicalis (Western clawed frog) protein is Transmembrane protein 196 (tmem196).